Consider the following 161-residue polypeptide: Ribosome maturation factor RimP (161 aa).

Belongs to the RimP family.

It localises to the cytoplasm. Functionally, required for maturation of 30S ribosomal subunits. The protein is Ribosome maturation factor RimP of Desulfosudis oleivorans (strain DSM 6200 / JCM 39069 / Hxd3) (Desulfococcus oleovorans).